A 248-amino-acid polypeptide reads, in one-letter code: tRNA (guanine-N(1)-)-methyltransferase (248 aa).

S-adenosyl-L-methionine-binding positions include Gly-117 and 137-142 (IGDFVL).

It belongs to the RNA methyltransferase TrmD family. In terms of assembly, homodimer.

It localises to the cytoplasm. The enzyme catalyses guanosine(37) in tRNA + S-adenosyl-L-methionine = N(1)-methylguanosine(37) in tRNA + S-adenosyl-L-homocysteine + H(+). Specifically methylates guanosine-37 in various tRNAs. This is tRNA (guanine-N(1)-)-methyltransferase from Polynucleobacter asymbioticus (strain DSM 18221 / CIP 109841 / QLW-P1DMWA-1) (Polynucleobacter necessarius subsp. asymbioticus).